A 335-amino-acid chain; its full sequence is ATP-dependent 6-phosphofructokinase (335 aa).

Residue G11 participates in ATP binding. 21-25 is an ADP binding site; sequence RAVVR. ATP contacts are provided by residues 72–73 and 102–105; these read RY and GDGS. D103 is a Mg(2+) binding site. Position 125–127 (125–127) interacts with substrate; that stretch reads TID. D127 acts as the Proton acceptor in catalysis. Residue R154 participates in ADP binding. Substrate is bound by residues R162 and 169–171; that span reads MGR. ADP contacts are provided by residues 185 to 187 and 213 to 215; these read GAD and KKH. Substrate is bound by residues E222, R244, and 250–253; that span reads HIQR.

This sequence belongs to the phosphofructokinase type A (PFKA) family. ATP-dependent PFK group I subfamily. Prokaryotic clade 'B1' sub-subfamily. In terms of assembly, homotetramer. It depends on Mg(2+) as a cofactor.

The protein resides in the cytoplasm. The enzyme catalyses beta-D-fructose 6-phosphate + ATP = beta-D-fructose 1,6-bisphosphate + ADP + H(+). It functions in the pathway carbohydrate degradation; glycolysis; D-glyceraldehyde 3-phosphate and glycerone phosphate from D-glucose: step 3/4. Allosterically activated by ADP and other diphosphonucleosides, and allosterically inhibited by phosphoenolpyruvate. Functionally, catalyzes the phosphorylation of D-fructose 6-phosphate to fructose 1,6-bisphosphate by ATP, the first committing step of glycolysis. The chain is ATP-dependent 6-phosphofructokinase from Streptococcus pneumoniae serotype 4 (strain ATCC BAA-334 / TIGR4).